Reading from the N-terminus, the 140-residue chain is uncharacterized protein (140 aa).

N-linked (GlcNAc...) asparagine; by host glycosylation is present at Asn-86. A helical transmembrane segment spans residues Ile-92 to Leu-112.

This sequence belongs to the asfivirus B117L family.

The protein resides in the host membrane. The protein localises to the virion. This is an uncharacterized protein from African swine fever virus (isolate Pig/Kenya/KEN-50/1950) (ASFV).